We begin with the raw amino-acid sequence, 257 residues long: Probable 6-phosphogluconolactonase (257 aa).

Belongs to the glucosamine/galactosamine-6-phosphate isomerase family. 6-phosphogluconolactonase subfamily.

The enzyme catalyses 6-phospho-D-glucono-1,5-lactone + H2O = 6-phospho-D-gluconate + H(+). The protein operates within carbohydrate degradation; pentose phosphate pathway; D-ribulose 5-phosphate from D-glucose 6-phosphate (oxidative stage): step 2/3. Hydrolysis of 6-phosphogluconolactone to 6-phosphogluconate. This Schizosaccharomyces pombe (strain 972 / ATCC 24843) (Fission yeast) protein is Probable 6-phosphogluconolactonase.